The primary structure comprises 1398 residues: MAKNKTIEERYQKKSQIEHILLRPDTYIGSVEMHTQLLWVWNKEKNRMVQKNITYVPGLYKIFDEIIVNAADVKAREKEKSENPMTCIKIEINKENKRISVYNDGEGIPVDIHKEMNIYVPHMIFGELLTSDNYDDAEDRITGGRNGFGAKLTNIFSKEFIVQCGDSSRKKEFKMTWSDNMSKFSEPHIKNYNGKDYVKVTFKPDLNKFGMTEMDDDIESLLFKRVYDLAGTCSVRVYLNGQRLAVKDFKSYVDLYLKDNSNDNKNNKGQNDNNNNNNNNNDENANQNNDNLDVSLSNEPADGTPTKNNNNNNNNNDEDEIVKIHEKQHRWEIVVSKSDGSQFQQVSFVNSICTTKGGSHVNYIVEQLLSSLSKKANAKNKGGMEIKSGHIRNHLWVFVNCLIVNPTFDSQTKETLTTKPVKFGSKCILSDKTINNVLKSPILSNILLWAQAKAQVELKKKMKAGSSKARERIIGIPKLEDANDAGSKYSQECTLILTEGDSAKTSCLAGLSIVGRDKYGVFPLKGKLLNVRDASFKQLMDNKEIQNIFRIMGLDITDKNKDDIKGLRYGSLMIMTDQDYDGSHIKGLLINMIHKFWPSLLKHKGFLSEFVTPIVKVQKGSQEYSFFTIAEYEQWKENTNLLGWKIKYYKGLGTSTDREFKQYFSDIKNHKIMFLWTGDRDGDSIDMAFSKKRIEDRKLWLQNFILGSYVDHKEKDLSYYDFVNKELIYYSRYDTERSIPNIMDGWKPGQRKVLYGCFKRNLRNECKVAQLVGYIAEHSAYHHHGESSLQQTIINMAQTFVGSNNINFLEPCGQFGSRKEGGKDASAARYIFTKLASSTRSIFNEYDDPILKYLNEEGQKIEPQYYIPVIPTILVNGCEGIGTGYSSFIPNYNYKDIIDNIKRYINKEPLIPMVPWYKDFKGRIESNGKTGYETIGIINKIDNDTLEITELPIKKWTQDYKEFLEELLTDEKHQLILDYIDNSSHEDICFTIKMDPAKLQKAEEEGLEKVFKLKSTLTTTNMTLFDPNLKLQRYSTELDILKEFCYQRLKAYENRKSYLISKLEKEKRIISNKTKFILAIVNNELIVNKKKKKVLVEELYRKGYDPYKDINKIKKEEIFEQELLDAADNPEDNEEIIAGITVKDYDYLLSMPIFSLTLEKVEDLLTQLKEKERELEILRNITVETMWLKDIEKVEEAIEFQRNVELSNREESNKFKVARKQGPSSMKKKKKKKKLSSDEESEGGDTSDSSEFLVNTLNIKKNTNKKTTTSSNNVNNSKKRLRKADDLNSNELDNTLSVSKTFDDNNNLTDNTPLINRLNDENNEFSSNNVDNKSTNKNSRKKKPKIADSTNDNNSELNSSIQINDNVNDDINITISPNKTINVNEFSSIKNKLLELGI.

Residues N69, N103, 131–133, and 144–151 each bind ATP; these read SDN and GRNGFGAK. Residues 260–317 are disordered; the sequence is NSNDNKNNKGQNDNNNNNNNNNDENANQNNDNLDVSLSNEPADGTPTKNNNNNNNNND. A compositionally biased stretch (low complexity) spans 267 to 291; sequence NKGQNDNNNNNNNNNDENANQNNDN. An ATP-binding site is contributed by 411 to 413; the sequence is QTK. Residues 493 to 608 enclose the Toprim domain; sequence CTLILTEGDS…SLLKHKGFLS (116 aa). 3 residues coordinate Mg(2+): E499, D577, and D579. The Topo IIA-type catalytic domain occupies 739–1191; the sequence is IPNIMDGWKP…TVETMWLKDI (453 aa). Catalysis depends on Y830, which acts as the O-(5'-phospho-DNA)-tyrosine intermediate. The tract at residues 1012 to 1021 is interaction with DNA; that stretch reads KLKSTLTTTN. 2 disordered regions span residues 1214–1250 and 1262–1361; these read KFKV…SDSS and NTNK…NSSI. Positions 1262–1276 are enriched in low complexity; sequence NTNKKTTTSSNNVNN. Composition is skewed to polar residues over residues 1287 to 1300 and 1348 to 1357; these read LNSN…SVSK and DSTNDNNSEL.

Belongs to the type II topoisomerase family. As to quaternary structure, homodimer. Requires Mg(2+) as cofactor. It depends on Mn(2+) as a cofactor. Ca(2+) is required as a cofactor.

The protein resides in the nucleus. The catalysed reaction is ATP-dependent breakage, passage and rejoining of double-stranded DNA.. Control of topological states of DNA by transient breakage and subsequent rejoining of DNA strands. Topoisomerase II makes double-strand breaks. The protein is DNA topoisomerase 2 (TOP2) of Plasmodium falciparum (isolate K1 / Thailand).